Reading from the N-terminus, the 484-residue chain is Cysteine--tRNA ligase (484 aa).

Cys29 lines the Zn(2+) pocket. The short motif at 31–41 (PTVQSAPHIGH) is the 'HIGH' region element. Cys219, His244, and Glu248 together coordinate Zn(2+). A 'KMSKS' region motif is present at residues 275 to 279 (KMSKS). Lys278 provides a ligand contact to ATP.

It belongs to the class-I aminoacyl-tRNA synthetase family. As to quaternary structure, monomer. Requires Zn(2+) as cofactor.

The protein localises to the cytoplasm. The enzyme catalyses tRNA(Cys) + L-cysteine + ATP = L-cysteinyl-tRNA(Cys) + AMP + diphosphate. This chain is Cysteine--tRNA ligase, found in Clavibacter michiganensis subsp. michiganensis (strain NCPPB 382).